The sequence spans 232 residues: Cysteine proteinase inhibitor 7 (232 aa).

Residues 1 to 29 (MDMRRASMCMMLICVSLVLLSGFGQFVIC) form the signal peptide. 2 Cystatin domains span residues 46 to 135 (GGFS…KNII) and 152 to 214 (FDWR…ERGN). Positions 91–95 (QVVAG) match the Secondary area of contact motif. Position 181 is a phosphoserine (serine 181).

It belongs to the cystatin family. Phytocystatin subfamily.

It is found in the secreted. Specific inhibitor of cysteine proteinases. Probably involved in the regulation of endogenous processes and in defense against pests and pathogens. In Arabidopsis thaliana (Mouse-ear cress), this protein is Cysteine proteinase inhibitor 7 (CYS7).